The following is a 307-amino-acid chain: Polysialic acid O-acetyltransferase (307 aa).

A compositionally biased stretch (basic and acidic residues) spans 1–90 (MLRLKTQDSR…LKTQDSRLKT (90 aa)). The segment at 1 to 95 (MLRLKTQDSR…SRLKTQDSFS (95 aa)) is disordered. A run of 13 repeats spans residues 3–9 (RLKTQDS), 10–16 (RLKTQDS), 17–23 (RLKTQDS), 24–30 (RLKTQDS), 31–37 (RLKTQDS), 38–44 (RLKTQDS), 45–51 (RLKTQDS), 52–58 (RLKTQDS), 59–65 (RLKTQDS), 66–72 (RLKTQDS), 73–79 (RLKTQDS), 80–86 (RLKTQDS), and 87–93 (RLKTQDS). Residues 3–93 (RLKTQDSRLK…QDSRLKTQDS (91 aa)) are 13 X 7 AA tandem repeat of RLKTQDS encoded by a 7 nucleotide repeat. Residues 208–210 (DGH), R237, K243, K261, and K278 contribute to the acetyl-CoA site.

Belongs to the transferase hexapeptide repeat family. As to quaternary structure, homotrimer. Hexamer formed by two homotrimers.

The enzyme catalyses [N-acetyl-alpha-D-neuraminosyl-(2-&gt;8)](n) + n acetyl-CoA = [N,O(9)-diacetyl-alpha-D-neuraminosyl-(2-&gt;8)](n) + n CoA. It carries out the reaction [N-acetyl-alpha-D-neuraminosyl-(2-&gt;8)](n) + n acetyl-CoA = [O(7),N-diacetyl-alpha-D-neuraminosyl-(2-&gt;8)](n) + n CoA. Its function is as follows. Catalyzes the O-acetylation of capsular polymeric sialic acid. Shows high substrate specificity toward polymers of sialic acid that contains a large number of residues. In Escherichia coli O1:K1 / APEC, this protein is Polysialic acid O-acetyltransferase.